The following is a 207-amino-acid chain: Large ribosomal subunit protein uL4 (207 aa).

Residues 49 to 78 (HAVKNRSAVSGGGRKPWRQKGTGRARQGSI) form a disordered region.

Belongs to the universal ribosomal protein uL4 family. In terms of assembly, part of the 50S ribosomal subunit.

One of the primary rRNA binding proteins, this protein initially binds near the 5'-end of the 23S rRNA. It is important during the early stages of 50S assembly. It makes multiple contacts with different domains of the 23S rRNA in the assembled 50S subunit and ribosome. Its function is as follows. Forms part of the polypeptide exit tunnel. In Streptococcus uberis (strain ATCC BAA-854 / 0140J), this protein is Large ribosomal subunit protein uL4.